Consider the following 361-residue polypeptide: Velvet complex subunit B (361 aa).

Residues 1–336 form the Velvet domain; the sequence is MIVRTEDQKL…GNQGQKLPLR (336 aa). Disordered regions lie at residues 42-222 and 327-361; these read PSST…NNIP and GNQG…EDDS. Low complexity-rich tracts occupy residues 57–74 and 93–107; these read PSAS…SRPP and PPSS…SQSQ. Residues 108–127 are compositionally biased toward polar residues; sequence DNLTPSSPYPPHSNSEQPQT. A compositionally biased stretch (pro residues) spans 130–147; the sequence is YPPPPPIDRAAPFPPPVL. Composition is skewed to polar residues over residues 149 to 168, 181 to 196, and 212 to 222; these read SIQS…NNDD, GYTN…YGSG, and SGNATPQNNIP. Residues 335–349 show a composition bias toward basic residues; the sequence is LRNRHGTGSKRRRRN.

The protein belongs to the velvet family. VelB subfamily. Component of the heterotrimeric velvet complex composed of laeA, veA and velB; VeA acting as a bridging protein between laeA and velB. Forms a heterodimeric complex with vosA; the formation of the velB-vosA complex is light-dependent.

The protein localises to the nucleus. Its subcellular location is the cytoplasm. Functionally, component of the velvet transcription factor complex that controls sexual/asexual developmental ratio in response to light, promoting sexual development in the darkness while stimulating asexual sporulation under illumination. The velvet complex acts as a global regulator for secondary metabolite gene expression. Component of the velB-VosA heterodimeric complex that plays a dual role in activating genes associated with spore maturation and repressing certain development-associated genes. The velB-VosA complex binds DNA through the DNA-binding domain of vosA that recognizes an 11-nucleotide consensus sequence 5'-CTGGCCGCGGC-3' consisting of two motifs in the promoters of key developmental regulatory genes. The polypeptide is Velvet complex subunit B (Coprinopsis cinerea (strain Okayama-7 / 130 / ATCC MYA-4618 / FGSC 9003) (Inky cap fungus)).